Consider the following 301-residue polypeptide: Ornithine carbamoyltransferase (301 aa).

Residues 46–49 (STRT), glutamine 73, arginine 97, and 124–127 (HPCQ) contribute to the carbamoyl phosphate site. Residues asparagine 154, aspartate 218, and 222–223 (SM) each bind L-ornithine. Residues 258-259 (CL) and arginine 286 each bind carbamoyl phosphate.

Belongs to the aspartate/ornithine carbamoyltransferase superfamily. OTCase family.

It localises to the cytoplasm. It catalyses the reaction carbamoyl phosphate + L-ornithine = L-citrulline + phosphate + H(+). The protein operates within amino-acid biosynthesis; L-arginine biosynthesis; L-arginine from L-ornithine and carbamoyl phosphate: step 1/3. Reversibly catalyzes the transfer of the carbamoyl group from carbamoyl phosphate (CP) to the N(epsilon) atom of ornithine (ORN) to produce L-citrulline. The chain is Ornithine carbamoyltransferase (argF) from Methanothermobacter thermautotrophicus (strain ATCC 29096 / DSM 1053 / JCM 10044 / NBRC 100330 / Delta H) (Methanobacterium thermoautotrophicum).